Here is a 264-residue protein sequence, read N- to C-terminus: Phosphonoacetaldehyde hydrolase (264 aa).

The Nucleophile role is filled by Asp-9. Residues Asp-9 and Ala-11 each coordinate Mg(2+). The Schiff-base intermediate with substrate role is filled by Lys-50. Residue Asp-183 participates in Mg(2+) binding.

Belongs to the HAD-like hydrolase superfamily. PhnX family. Homodimer. Mg(2+) is required as a cofactor.

The catalysed reaction is phosphonoacetaldehyde + H2O = acetaldehyde + phosphate + H(+). Functionally, involved in phosphonate degradation. The sequence is that of Phosphonoacetaldehyde hydrolase from Bacillus cereus (strain ZK / E33L).